The chain runs to 701 residues: Sodium/hydrogen exchanger 6 (701 aa).

2 helical membrane-spanning segments follow: residues 71–91 (SANL…IWLF) and 103–123 (GLAM…IHVP). The N-linked (GlcNAc...) asparagine glycan is linked to asparagine 128. 8 consecutive transmembrane segments (helical) span residues 176–196 (VTFD…FYAG), 211–231 (ILAY…SIMY), 252–272 (CLLF…AIFH), 278–298 (VELY…AIVL), 324–344 (IGIF…TGVV), 372–392 (TFLL…FCGI), 414–434 (FELL…LTLF), and 436–456 (FQNH…IFLG). Lysine 475 participates in a covalent cross-link: Glycyl lysine isopeptide (Lys-Gly) (interchain with G-Cter in ubiquitin). The next 2 membrane-spanning stretches (helical) occupy residues 479-499 (NFQH…ALAI) and 515-535 (LLIV…MLSC).

This sequence belongs to the monovalent cation:proton antiporter 1 (CPA1) transporter (TC 2.A.36) family. Homodimer. Interacts with RACK1; regulates the distribution of SLC9A6 between endosomes and the plasma membrane. In terms of processing, ubiquitinated (in vitro). Post-translationally, glycosylated. In terms of tissue distribution, ubiquitous. High expression in brain, skeletal muscle, and heart, but is also detected at lower levels in most other tissues.

It is found in the endosome membrane. Its subcellular location is the recycling endosome membrane. It localises to the early endosome membrane. The protein resides in the late endosome membrane. The protein localises to the cell membrane. The enzyme catalyses Na(+)(in) + H(+)(out) = Na(+)(out) + H(+)(in). It carries out the reaction K(+)(in) + H(+)(out) = K(+)(out) + H(+)(in). Its function is as follows. Endosomal Na(+), K(+)/H(+) antiporter. Mediates the electroneutral exchange of endosomal luminal H(+) for a cytosolic Na(+) or K(+). By facilitating proton efflux, SLC9A6 counteracts the acidity generated by vacuolar (V)-ATPase, thereby limiting luminal acidification. Responsible for alkalizing and maintaining the endosomal pH, and consequently in, e.g., endosome maturation and trafficking of recycling endosomal cargo. Plays a critical role during neurodevelopment by regulating synaptic development and plasticity. Implicated in the maintenance of cell polarity in a manner that is dependent on its ability to modulate intravesicular pH. Regulates intracelular pH in some specialized cells, osteoclasts and stereocilia where this transporter localizes to the plasma membrane. The protein is Sodium/hydrogen exchanger 6 of Homo sapiens (Human).